We begin with the raw amino-acid sequence, 367 residues long: Alginate lyase (367 aa).

Positions 1-24 (MTIFKRISSPALLALALFGGAAHA) are cleaved as a signal peptide. Residues 63-64 (SK), 136-137 (HT), and Tyr-254 contribute to the substrate site.

This sequence belongs to the polysaccharide lyase 5 family.

The protein resides in the periplasm. It carries out the reaction Eliminative cleavage of alginate to give oligosaccharides with 4-deoxy-alpha-L-erythro-hex-4-enuronosyl groups at their non-reducing ends and beta-D-mannuronate at their reducing end.. In terms of biological role, catalyzes the depolymerization of alginate by cleaving the beta-1,4 glycosidic bond between two adjacent sugar residues via a beta-elimination mechanism. May serve to degrade mislocalized alginate that is trapped in the periplasmic space. The chain is Alginate lyase from Pseudomonas putida (strain ATCC 700007 / DSM 6899 / JCM 31910 / BCRC 17059 / LMG 24140 / F1).